Here is a 264-residue protein sequence, read N- to C-terminus: Thymidylate synthase (264 aa).

Residues R21 and 126–127 (RR) contribute to the dUMP site. C146 serves as the catalytic Nucleophile. Residues 166–169 (RSAD), N177, and 207–209 (HLY) contribute to the dUMP site. D169 provides a ligand contact to (6R)-5,10-methylene-5,6,7,8-tetrahydrofolate. A263 lines the (6R)-5,10-methylene-5,6,7,8-tetrahydrofolate pocket.

Belongs to the thymidylate synthase family. Bacterial-type ThyA subfamily. In terms of assembly, homodimer.

The protein localises to the cytoplasm. It catalyses the reaction dUMP + (6R)-5,10-methylene-5,6,7,8-tetrahydrofolate = 7,8-dihydrofolate + dTMP. The protein operates within pyrimidine metabolism; dTTP biosynthesis. Catalyzes the reductive methylation of 2'-deoxyuridine-5'-monophosphate (dUMP) to 2'-deoxythymidine-5'-monophosphate (dTMP) while utilizing 5,10-methylenetetrahydrofolate (mTHF) as the methyl donor and reductant in the reaction, yielding dihydrofolate (DHF) as a by-product. This enzymatic reaction provides an intracellular de novo source of dTMP, an essential precursor for DNA biosynthesis. The polypeptide is Thymidylate synthase (Bradyrhizobium diazoefficiens (strain JCM 10833 / BCRC 13528 / IAM 13628 / NBRC 14792 / USDA 110)).